A 424-amino-acid chain; its full sequence is Histidine--tRNA ligase (424 aa).

It belongs to the class-II aminoacyl-tRNA synthetase family. As to quaternary structure, homodimer.

It is found in the cytoplasm. The enzyme catalyses tRNA(His) + L-histidine + ATP = L-histidyl-tRNA(His) + AMP + diphosphate + H(+). The chain is Histidine--tRNA ligase from Salmonella paratyphi A (strain ATCC 9150 / SARB42).